Consider the following 397-residue polypeptide: Ribosomal RNA processing protein 1 homolog (397 aa).

Over residues 334-343 (EAAEAARQEN) the composition is skewed to basic and acidic residues. The tract at residues 334-366 (EAAEAARQENGDDVPDDEIAEVKKGNGKKTAVP) is disordered.

The protein belongs to the RRP1 family.

It is found in the nucleus. May be involved in the generation of 28S rRNA. The polypeptide is Ribosomal RNA processing protein 1 homolog (Caenorhabditis elegans).